The chain runs to 245 residues: 1-(5-phosphoribosyl)-5-[(5-phosphoribosylamino)methylideneamino] imidazole-4-carboxamide isomerase (245 aa).

The Proton acceptor role is filled by aspartate 8. The active-site Proton donor is the aspartate 130.

Belongs to the HisA/HisF family.

The protein resides in the cytoplasm. The enzyme catalyses 1-(5-phospho-beta-D-ribosyl)-5-[(5-phospho-beta-D-ribosylamino)methylideneamino]imidazole-4-carboxamide = 5-[(5-phospho-1-deoxy-D-ribulos-1-ylimino)methylamino]-1-(5-phospho-beta-D-ribosyl)imidazole-4-carboxamide. It functions in the pathway amino-acid biosynthesis; L-histidine biosynthesis; L-histidine from 5-phospho-alpha-D-ribose 1-diphosphate: step 4/9. The polypeptide is 1-(5-phosphoribosyl)-5-[(5-phosphoribosylamino)methylideneamino] imidazole-4-carboxamide isomerase (Pseudomonas fluorescens (strain Pf0-1)).